The sequence spans 494 residues: Ketol-acid reductoisomerase (NADP(+)) (494 aa).

Residues 14 to 208 (LDQLGRCRFM…GGHRAGCLES (195 aa)) enclose the KARI N-terminal Rossmann domain. NADP(+)-binding positions include 45-48 (CGAQ), Arg68, Arg76, Ser78, and 108-110 (DKQ). Residue His132 is part of the active site. Position 158 (Gly158) interacts with NADP(+). 2 consecutive KARI C-terminal knotted domains span residues 209–344 (SFVA…NYPE) and 345–487 (SDVE…MSDM). Residues Asp217, Glu221, Glu389, and Glu393 each coordinate Mg(2+). Ser414 provides a ligand contact to substrate.

This sequence belongs to the ketol-acid reductoisomerase family. The cofactor is Mg(2+).

It carries out the reaction (2R)-2,3-dihydroxy-3-methylbutanoate + NADP(+) = (2S)-2-acetolactate + NADPH + H(+). The enzyme catalyses (2R,3R)-2,3-dihydroxy-3-methylpentanoate + NADP(+) = (S)-2-ethyl-2-hydroxy-3-oxobutanoate + NADPH + H(+). It participates in amino-acid biosynthesis; L-isoleucine biosynthesis; L-isoleucine from 2-oxobutanoate: step 2/4. Its pathway is amino-acid biosynthesis; L-valine biosynthesis; L-valine from pyruvate: step 2/4. Functionally, involved in the biosynthesis of branched-chain amino acids (BCAA). Catalyzes an alkyl-migration followed by a ketol-acid reduction of (S)-2-acetolactate (S2AL) to yield (R)-2,3-dihydroxy-isovalerate. In the isomerase reaction, S2AL is rearranged via a Mg-dependent methyl migration to produce 3-hydroxy-3-methyl-2-ketobutyrate (HMKB). In the reductase reaction, this 2-ketoacid undergoes a metal-dependent reduction by NADPH to yield (R)-2,3-dihydroxy-isovalerate. This is Ketol-acid reductoisomerase (NADP(+)) from Aliivibrio fischeri (strain ATCC 700601 / ES114) (Vibrio fischeri).